The sequence spans 246 residues: Sec-independent protein translocase protein TatB (246 aa).

Residues Met-1–Gly-21 form a helical membrane-spanning segment. Disordered stretches follow at residues Ser-94–Val-122, Ser-179–Thr-204, and Val-225–Ala-246. 2 stretches are compositionally biased toward polar residues: residues Gln-97–Pro-112 and Pro-187–Glu-197.

This sequence belongs to the TatB family. The Tat system comprises two distinct complexes: a TatABC complex, containing multiple copies of TatA, TatB and TatC subunits, and a separate TatA complex, containing only TatA subunits. Substrates initially bind to the TatABC complex, which probably triggers association of the separate TatA complex to form the active translocon.

Its subcellular location is the cell inner membrane. Functionally, part of the twin-arginine translocation (Tat) system that transports large folded proteins containing a characteristic twin-arginine motif in their signal peptide across membranes. Together with TatC, TatB is part of a receptor directly interacting with Tat signal peptides. TatB may form an oligomeric binding site that transiently accommodates folded Tat precursor proteins before their translocation. In Agrobacterium fabrum (strain C58 / ATCC 33970) (Agrobacterium tumefaciens (strain C58)), this protein is Sec-independent protein translocase protein TatB.